The following is a 325-amino-acid chain: ATP phosphoribosyltransferase (325 aa).

The protein belongs to the ATP phosphoribosyltransferase family. Long subfamily. Requires Mg(2+) as cofactor.

It localises to the cytoplasm. The enzyme catalyses 1-(5-phospho-beta-D-ribosyl)-ATP + diphosphate = 5-phospho-alpha-D-ribose 1-diphosphate + ATP. It functions in the pathway amino-acid biosynthesis; L-histidine biosynthesis; L-histidine from 5-phospho-alpha-D-ribose 1-diphosphate: step 1/9. Its activity is regulated as follows. Feedback inhibited by histidine. Catalyzes the condensation of ATP and 5-phosphoribose 1-diphosphate to form N'-(5'-phosphoribosyl)-ATP (PR-ATP). Has a crucial role in the pathway because the rate of histidine biosynthesis seems to be controlled primarily by regulation of HisG enzymatic activity. The polypeptide is ATP phosphoribosyltransferase (Nitrobacter hamburgensis (strain DSM 10229 / NCIMB 13809 / X14)).